Consider the following 517-residue polypeptide: NAD(P)H-quinone oxidoreductase subunit 2 (517 aa).

14 consecutive transmembrane segments (helical) span residues 16 to 36, 43 to 63, 80 to 100, 110 to 130, 133 to 153, 168 to 188, 211 to 231, 245 to 265, 279 to 299, 307 to 327, 335 to 355, 379 to 399, 401 to 421, and 467 to 487; these read ILPE…DLIF, WLPY…YLAW, LSIV…LMSI, LAEF…LCGA, LVMI…MTGY, LLIG…LYGL, LGLA…ISAV, PTPV…ALAI, WHFV…VVAL, MLAY…VAGT, VFYL…IILF, LALS…GFFG, IYLF…LGLV, and VGIV…NPLF.

Belongs to the complex I subunit 2 family. NDH-1 can be composed of about 15 different subunits; different subcomplexes with different compositions have been identified which probably have different functions.

It is found in the cellular thylakoid membrane. The enzyme catalyses a plastoquinone + NADH + (n+1) H(+)(in) = a plastoquinol + NAD(+) + n H(+)(out). It catalyses the reaction a plastoquinone + NADPH + (n+1) H(+)(in) = a plastoquinol + NADP(+) + n H(+)(out). In terms of biological role, NDH-1 shuttles electrons from an unknown electron donor, via FMN and iron-sulfur (Fe-S) centers, to quinones in the respiratory and/or the photosynthetic chain. The immediate electron acceptor for the enzyme in this species is believed to be plastoquinone. Couples the redox reaction to proton translocation, and thus conserves the redox energy in a proton gradient. Cyanobacterial NDH-1 also plays a role in inorganic carbon-concentration. In Rippkaea orientalis (strain PCC 8801 / RF-1) (Cyanothece sp. (strain PCC 8801)), this protein is NAD(P)H-quinone oxidoreductase subunit 2.